The sequence spans 191 residues: Lipopolysaccharide export system protein LptC (191 aa).

The helical transmembrane segment at 7 to 25 (WVIIVLSLAVLVMIGINMA) threads the bilayer.

It belongs to the LptC family. In terms of assembly, component of the lipopolysaccharide transport and assembly complex. Interacts with LptA and the LptBFG transporter complex.

Its subcellular location is the cell inner membrane. Functionally, involved in the assembly of lipopolysaccharide (LPS). Required for the translocation of LPS from the inner membrane to the outer membrane. Facilitates the transfer of LPS from the inner membrane to the periplasmic protein LptA. Could be a docking site for LptA. The chain is Lipopolysaccharide export system protein LptC from Escherichia coli O157:H7.